The primary structure comprises 490 residues: GTPase Der (490 aa).

2 consecutive EngA-type G domains span residues 3-166 and 200-373; these read PVVA…AEAM and IKLA…DSAT. Residues 9–16, 56–60, 118–121, 206–213, 253–257, and 318–321 contribute to the GTP site; these read GRPNVGKS, DTGGI, NKVD, GKPNVGKS, DTAGV, and NKWD. The region spanning 374-458 is the KH-like domain; it reads RRVSTSMLTR…PIQLRFQEGG (85 aa).

This sequence belongs to the TRAFAC class TrmE-Era-EngA-EngB-Septin-like GTPase superfamily. EngA (Der) GTPase family. Associates with the 50S ribosomal subunit.

Its function is as follows. GTPase that plays an essential role in the late steps of ribosome biogenesis. In Shewanella halifaxensis (strain HAW-EB4), this protein is GTPase Der.